An 825-amino-acid chain; its full sequence is IQ and AAA domain-containing protein 1-like (825 aa).

The 30-residue stretch at 206-235 (RDQGAIVIQKVWKGYLQRKRIEQDRRVEME) folds into the IQ domain. The span at 344–366 (QAQESRKKDQEKKEKNKEKEKEK) shows a compositional bias: basic and acidic residues. Disordered stretches follow at residues 344 to 378 (QAQE…KEEK) and 459 to 487 (DREE…KDLT). Over residues 467-482 (KSPKKKGGKKSGKKKK) the composition is skewed to basic residues. ATP is bound at residue 572–579 (GPSGMGKK).

Belongs to the AAA ATPase family.

This Mus musculus (Mouse) protein is IQ and AAA domain-containing protein 1-like (Iqca1l).